A 305-amino-acid polypeptide reads, in one-letter code: Glycerol-3-phosphate dehydrogenase [NAD(P)+] (305 aa).

NADPH contacts are provided by Trp-11, Arg-31, and Lys-79. The sn-glycerol 3-phosphate site is built by Lys-79 and Gly-107. Ala-111 is a binding site for NADPH. Residues Lys-162, Asp-215, Ser-225, Arg-226, and Asn-227 each coordinate sn-glycerol 3-phosphate. The Proton acceptor role is filled by Lys-162. Arg-226 lines the NADPH pocket. An NADPH-binding site is contributed by Glu-252.

Belongs to the NAD-dependent glycerol-3-phosphate dehydrogenase family.

The protein localises to the cytoplasm. The catalysed reaction is sn-glycerol 3-phosphate + NAD(+) = dihydroxyacetone phosphate + NADH + H(+). It catalyses the reaction sn-glycerol 3-phosphate + NADP(+) = dihydroxyacetone phosphate + NADPH + H(+). It functions in the pathway membrane lipid metabolism; glycerophospholipid metabolism. Its function is as follows. Catalyzes the reduction of the glycolytic intermediate dihydroxyacetone phosphate (DHAP) to sn-glycerol 3-phosphate (G3P), the key precursor for phospholipid synthesis. This chain is Glycerol-3-phosphate dehydrogenase [NAD(P)+], found in Gloeobacter violaceus (strain ATCC 29082 / PCC 7421).